The sequence spans 154 residues: Ribosome maturation factor RimP (154 aa).

This sequence belongs to the RimP family.

The protein resides in the cytoplasm. Required for maturation of 30S ribosomal subunits. This Clostridium novyi (strain NT) protein is Ribosome maturation factor RimP.